The sequence spans 407 residues: Imidazolonepropionase (407 aa).

Residues histidine 74 and histidine 76 each coordinate Fe(3+). Positions 74 and 76 each coordinate Zn(2+). 4-imidazolone-5-propanoate-binding residues include arginine 83, tyrosine 146, and histidine 179. Residue tyrosine 146 participates in N-formimidoyl-L-glutamate binding. A Fe(3+)-binding site is contributed by histidine 244. Histidine 244 contacts Zn(2+). Glutamine 247 provides a ligand contact to 4-imidazolone-5-propanoate. Aspartate 319 is a Fe(3+) binding site. Aspartate 319 provides a ligand contact to Zn(2+). Residues asparagine 321 and glycine 323 each contribute to the N-formimidoyl-L-glutamate site. Threonine 324 lines the 4-imidazolone-5-propanoate pocket.

The protein belongs to the metallo-dependent hydrolases superfamily. HutI family. It depends on Zn(2+) as a cofactor. Requires Fe(3+) as cofactor.

It localises to the cytoplasm. The enzyme catalyses 4-imidazolone-5-propanoate + H2O = N-formimidoyl-L-glutamate. The protein operates within amino-acid degradation; L-histidine degradation into L-glutamate; N-formimidoyl-L-glutamate from L-histidine: step 3/3. In terms of biological role, catalyzes the hydrolytic cleavage of the carbon-nitrogen bond in imidazolone-5-propanoate to yield N-formimidoyl-L-glutamate. It is the third step in the universal histidine degradation pathway. The chain is Imidazolonepropionase from Salmonella schwarzengrund (strain CVM19633).